Consider the following 270-residue polypeptide: Phosphoribosylformylglycinamidine synthase subunit PurQ (270 aa).

Positions 5–251 constitute a Glutamine amidotransferase type-1 domain; sequence ALVLHATGTN…VIRERDSEEE (247 aa). C95 acts as the Nucleophile in catalysis. Catalysis depends on residues H236 and E238.

In terms of assembly, part of the FGAM synthase complex composed of 1 PurL, 1 PurQ and 2 PurS subunits.

It is found in the cytoplasm. The enzyme catalyses N(2)-formyl-N(1)-(5-phospho-beta-D-ribosyl)glycinamide + L-glutamine + ATP + H2O = 2-formamido-N(1)-(5-O-phospho-beta-D-ribosyl)acetamidine + L-glutamate + ADP + phosphate + H(+). It catalyses the reaction L-glutamine + H2O = L-glutamate + NH4(+). The protein operates within purine metabolism; IMP biosynthesis via de novo pathway; 5-amino-1-(5-phospho-D-ribosyl)imidazole from N(2)-formyl-N(1)-(5-phospho-D-ribosyl)glycinamide: step 1/2. Part of the phosphoribosylformylglycinamidine synthase complex involved in the purines biosynthetic pathway. Catalyzes the ATP-dependent conversion of formylglycinamide ribonucleotide (FGAR) and glutamine to yield formylglycinamidine ribonucleotide (FGAM) and glutamate. The FGAM synthase complex is composed of three subunits. PurQ produces an ammonia molecule by converting glutamine to glutamate. PurL transfers the ammonia molecule to FGAR to form FGAM in an ATP-dependent manner. PurS interacts with PurQ and PurL and is thought to assist in the transfer of the ammonia molecule from PurQ to PurL. The chain is Phosphoribosylformylglycinamidine synthase subunit PurQ from Treponema denticola (strain ATCC 35405 / DSM 14222 / CIP 103919 / JCM 8153 / KCTC 15104).